The chain runs to 149 residues: Large ribosomal subunit protein uL22 (149 aa).

Belongs to the universal ribosomal protein uL22 family. In terms of assembly, part of the 50S ribosomal subunit.

Its function is as follows. This protein binds specifically to 23S rRNA; its binding is stimulated by other ribosomal proteins, e.g. L4, L17, and L20. It is important during the early stages of 50S assembly. It makes multiple contacts with different domains of the 23S rRNA in the assembled 50S subunit and ribosome. In terms of biological role, the globular domain of the protein is located near the polypeptide exit tunnel on the outside of the subunit, while an extended beta-hairpin is found that lines the wall of the exit tunnel in the center of the 70S ribosome. The sequence is that of Large ribosomal subunit protein uL22 from Petrotoga mobilis (strain DSM 10674 / SJ95).